We begin with the raw amino-acid sequence, 151 residues long: Macrodomain Ter protein (151 aa).

It belongs to the MatP family. Homodimer.

It is found in the cytoplasm. Required for spatial organization of the terminus region of the chromosome (Ter macrodomain) during the cell cycle. Prevents early segregation of duplicated Ter macrodomains during cell division. Binds specifically to matS, which is a 13 bp signature motif repeated within the Ter macrodomain. The sequence is that of Macrodomain Ter protein from Enterobacter sp. (strain 638).